Consider the following 159-residue polypeptide: Putative transcriptional regulatory protein rrnAC0199 (159 aa).

The protein belongs to the Tfx family.

In terms of biological role, putative transcriptional regulator. This chain is Putative transcriptional regulatory protein rrnAC0199, found in Haloarcula marismortui (strain ATCC 43049 / DSM 3752 / JCM 8966 / VKM B-1809) (Halobacterium marismortui).